Reading from the N-terminus, the 690-residue chain is Elongation factor G (690 aa).

The tr-type G domain occupies 8–283; sequence EDYRNFGIMA…AVVDYLPSPV (276 aa). Residues 17–24, 81–85, and 135–138 contribute to the GTP site; these read AHIDAGKT, DTPGH, and NKMD.

It belongs to the TRAFAC class translation factor GTPase superfamily. Classic translation factor GTPase family. EF-G/EF-2 subfamily.

It is found in the cytoplasm. In terms of biological role, catalyzes the GTP-dependent ribosomal translocation step during translation elongation. During this step, the ribosome changes from the pre-translocational (PRE) to the post-translocational (POST) state as the newly formed A-site-bound peptidyl-tRNA and P-site-bound deacylated tRNA move to the P and E sites, respectively. Catalyzes the coordinated movement of the two tRNA molecules, the mRNA and conformational changes in the ribosome. The protein is Elongation factor G of Rhodopseudomonas palustris (strain BisB5).